The primary structure comprises 214 residues: Adenylate kinase (214 aa).

Position 10–15 (10–15) interacts with ATP; the sequence is GAGKGT. Residues 30–59 are NMP; that stretch reads STGDMLRAAVKAQTPVGLKAKAVMDRGELV. Residues Thr31, Arg36, 57 to 59, 85 to 88, and Gln92 each bind AMP; these read ELV and GYPR. Residues 126–163 form an LID region; the sequence is GRFTCAKCGTGYHDRHKQPAREGVCDVCGSTEFKRRPD. Position 127 (Arg127) interacts with ATP. 4 residues coordinate Zn(2+): Cys130, Cys133, Cys150, and Cys153. Positions 160 and 172 each coordinate AMP. Gly200 provides a ligand contact to ATP.

This sequence belongs to the adenylate kinase family. As to quaternary structure, monomer.

The protein resides in the cytoplasm. It catalyses the reaction AMP + ATP = 2 ADP. It participates in purine metabolism; AMP biosynthesis via salvage pathway; AMP from ADP: step 1/1. Functionally, catalyzes the reversible transfer of the terminal phosphate group between ATP and AMP. Plays an important role in cellular energy homeostasis and in adenine nucleotide metabolism. The sequence is that of Adenylate kinase from Erythrobacter litoralis (strain HTCC2594).